We begin with the raw amino-acid sequence, 312 residues long: Acetylglutamate kinase (312 aa).

Substrate-binding positions include 74–75, arginine 96, and asparagine 195; that span reads GG.

It belongs to the acetylglutamate kinase family. ArgB subfamily.

It localises to the cytoplasm. It catalyses the reaction N-acetyl-L-glutamate + ATP = N-acetyl-L-glutamyl 5-phosphate + ADP. It functions in the pathway amino-acid biosynthesis; L-arginine biosynthesis; N(2)-acetyl-L-ornithine from L-glutamate: step 2/4. Its function is as follows. Catalyzes the ATP-dependent phosphorylation of N-acetyl-L-glutamate. This Nocardioides sp. (strain ATCC BAA-499 / JS614) protein is Acetylglutamate kinase.